A 218-amino-acid polypeptide reads, in one-letter code: MEWSQIFHDITTKHDFKAMHDFLEKEYSTAIVYPDRENIYQAFDLTPFENIKVVILGQDPYHGPNQAHGLAFSVQPNAKFPPSLRNMYKELADDIGCVRQTPHLQDWAREGVLLLNTVLTVRQGEANSHRDIGWETFTDEIIKAVSDYKEHVVFILWGKPAQQKIKLIDTSKHCIIKSVHPSPLSAYRGFFGSKPYSKANAYLESVGKLPINWCESEA.

Asp59 (proton acceptor) is an active-site residue.

The protein belongs to the uracil-DNA glycosylase (UDG) superfamily. UNG family.

It localises to the cytoplasm. The catalysed reaction is Hydrolyzes single-stranded DNA or mismatched double-stranded DNA and polynucleotides, releasing free uracil.. In terms of biological role, excises uracil residues from the DNA which can arise as a result of misincorporation of dUMP residues by DNA polymerase or due to deamination of cytosine. The protein is Uracil-DNA glycosylase of Staphylococcus aureus (strain MSSA476).